The primary structure comprises 209 residues: Imidazole glycerol phosphate synthase subunit HisH (209 aa).

The 205-residue stretch at methionine 1–serine 205 folds into the Glutamine amidotransferase type-1 domain. Cysteine 79 serves as the catalytic Nucleophile. Catalysis depends on residues histidine 180 and glutamate 182.

As to quaternary structure, heterodimer of HisH and HisF.

Its subcellular location is the cytoplasm. It carries out the reaction 5-[(5-phospho-1-deoxy-D-ribulos-1-ylimino)methylamino]-1-(5-phospho-beta-D-ribosyl)imidazole-4-carboxamide + L-glutamine = D-erythro-1-(imidazol-4-yl)glycerol 3-phosphate + 5-amino-1-(5-phospho-beta-D-ribosyl)imidazole-4-carboxamide + L-glutamate + H(+). It catalyses the reaction L-glutamine + H2O = L-glutamate + NH4(+). The protein operates within amino-acid biosynthesis; L-histidine biosynthesis; L-histidine from 5-phospho-alpha-D-ribose 1-diphosphate: step 5/9. IGPS catalyzes the conversion of PRFAR and glutamine to IGP, AICAR and glutamate. The HisH subunit catalyzes the hydrolysis of glutamine to glutamate and ammonia as part of the synthesis of IGP and AICAR. The resulting ammonia molecule is channeled to the active site of HisF. This chain is Imidazole glycerol phosphate synthase subunit HisH, found in Bacillus cereus (strain B4264).